Here is a 476-residue protein sequence, read N- to C-terminus: Small ribosomal subunit protein mS29 (476 aa).

Residues 1 to 54 (MLPKFRSRSSIIKNTERISNILSGGKLTVCGSKLGGLYTFEKCTFNKYYSSSQY) constitute a mitochondrion transit peptide. The tract at residues 58–97 (GRPVGGNIHSSSNQQRQKNSEAPRINEIPPSTSSVEKSTT) is disordered. Composition is skewed to polar residues over residues 65–74 (IHSSSNQQRQ) and 86–97 (PPSTSSVEKSTT). 200 to 207 (GAPGSGRS) lines the ATP pocket.

Belongs to the mitochondrion-specific ribosomal protein mS29 family. As to quaternary structure, component of the mitochondrial small ribosomal subunit (mt-SSU). Mature yeast 74S mitochondrial ribosomes consist of a small (37S) and a large (54S) subunit. The 37S small subunit contains a 15S ribosomal RNA (15S mt-rRNA) and at least 32 different proteins. The 54S large subunit contains a 21S rRNA (21S mt-rRNA) and at least 45 different proteins.

The protein resides in the mitochondrion. Its function is as follows. Component of the mitochondrial ribosome (mitoribosome), a dedicated translation machinery responsible for the synthesis of mitochondrial genome-encoded proteins, including at least some of the essential transmembrane subunits of the mitochondrial respiratory chain. The mitoribosomes are attached to the mitochondrial inner membrane and translation products are cotranslationally integrated into the membrane. mS29 binds GTP and is probably an active GTPase. GTP hydrolysis may be linked to subunit association. mS29 also has an extraribosomal function, being required for maintenance of mitochondrial DNA. In Schizosaccharomyces pombe (strain 972 / ATCC 24843) (Fission yeast), this protein is Small ribosomal subunit protein mS29 (rsm23).